Consider the following 382-residue polypeptide: Flap endonuclease 1 (382 aa).

An N-domain region spans residues 1–105 (MGIKGLNAII…HELTKRSSRR (105 aa)). D34 is a binding site for Mg(2+). DNA contacts are provided by R47 and R71. D87, E156, E158, D177, and D179 together coordinate Mg(2+). The segment at 120 to 251 (EKMKQERRLV…VTALKLIKTH (132 aa)) is I-domain. E156 provides a ligand contact to DNA. 2 residues coordinate DNA: G229 and D231. D231 contributes to the Mg(2+) binding site. Residues 339–347 (IQGRLDGFF) are interaction with PCNA. Residues 358-382 (AAAAKRAQENKKLNKNKNKVTKGRR) are disordered. Over residues 370-382 (LNKNKNKVTKGRR) the composition is skewed to basic residues.

The protein belongs to the XPG/RAD2 endonuclease family. FEN1 subfamily. As to quaternary structure, interacts with PCNA. Three molecules of RAD27 bind to one PCNA trimer with each molecule binding to one PCNA monomer. PCNA stimulates the nuclease activity without altering cleavage specificity. Mg(2+) is required as a cofactor. Post-translationally, phosphorylated. Phosphorylation upon DNA damage induces relocalization to the nuclear plasma.

The protein localises to the nucleus. It is found in the nucleolus. The protein resides in the nucleoplasm. It localises to the mitochondrion. Its function is as follows. Structure-specific nuclease with 5'-flap endonuclease and 5'-3' exonuclease activities involved in DNA replication and repair. During DNA replication, cleaves the 5'-overhanging flap structure that is generated by displacement synthesis when DNA polymerase encounters the 5'-end of a downstream Okazaki fragment. It enters the flap from the 5'-end and then tracks to cleave the flap base, leaving a nick for ligation. Also involved in the long patch base excision repair (LP-BER) pathway, by cleaving within the apurinic/apyrimidinic (AP) site-terminated flap. Acts as a genome stabilization factor that prevents flaps from equilibrating into structures that lead to duplications and deletions. Also possesses 5'-3' exonuclease activity on nicked or gapped double-stranded DNA, and exhibits RNase H activity. Also involved in replication and repair of rDNA and in repairing mitochondrial DNA. The protein is Flap endonuclease 1 of Saccharomyces cerevisiae (strain YJM789) (Baker's yeast).